A 342-amino-acid chain; its full sequence is Anthranilate phosphoribosyltransferase (342 aa).

5-phospho-alpha-D-ribose 1-diphosphate contacts are provided by residues glycine 74, 77-78, threonine 82, 84-87, 101-109, and serine 113; these read GD, NVST, and KHGNRSVSG. Glycine 74 contributes to the anthranilate binding site. Residue serine 86 participates in Mg(2+) binding. Residue asparagine 104 coordinates anthranilate. Arginine 159 is an anthranilate binding site. 2 residues coordinate Mg(2+): aspartate 218 and glutamate 219.

It belongs to the anthranilate phosphoribosyltransferase family. As to quaternary structure, homodimer. The cofactor is Mg(2+).

It catalyses the reaction N-(5-phospho-beta-D-ribosyl)anthranilate + diphosphate = 5-phospho-alpha-D-ribose 1-diphosphate + anthranilate. It participates in amino-acid biosynthesis; L-tryptophan biosynthesis; L-tryptophan from chorismate: step 2/5. In terms of biological role, catalyzes the transfer of the phosphoribosyl group of 5-phosphorylribose-1-pyrophosphate (PRPP) to anthranilate to yield N-(5'-phosphoribosyl)-anthranilate (PRA). The sequence is that of Anthranilate phosphoribosyltransferase from Sulfolobus acidocaldarius (strain ATCC 33909 / DSM 639 / JCM 8929 / NBRC 15157 / NCIMB 11770).